Here is a 546-residue protein sequence, read N- to C-terminus: CTP synthase (546 aa).

Residues 1–266 form an amidoligase domain region; it reads MTTNYIFVTG…DDLVCQRFGI (266 aa). Residue serine 14 participates in CTP binding. Serine 14 is a binding site for UTP. ATP-binding positions include 15-20 and aspartate 72; that span reads SLGKGI. Residues aspartate 72 and glutamate 140 each coordinate Mg(2+). Residues 147–149, 187–192, and lysine 223 contribute to the CTP site; these read DIE and KTKPTQ. UTP contacts are provided by residues 187-192 and lysine 223; that span reads KTKPTQ. 239-241 contributes to the ATP binding site; it reads KDV. Positions 291–542 constitute a Glutamine amidotransferase type-1 domain; that stretch reads TIGMVGKYIE…VKAAGENARG (252 aa). Residue glycine 352 participates in L-glutamine binding. Cysteine 379 serves as the catalytic Nucleophile; for glutamine hydrolysis. L-glutamine-binding positions include 380–383, glutamate 403, and arginine 470; that span reads LGMQ. Residues histidine 515 and glutamate 517 contribute to the active site.

The protein belongs to the CTP synthase family. As to quaternary structure, homotetramer.

The catalysed reaction is UTP + L-glutamine + ATP + H2O = CTP + L-glutamate + ADP + phosphate + 2 H(+). It carries out the reaction L-glutamine + H2O = L-glutamate + NH4(+). The enzyme catalyses UTP + NH4(+) + ATP = CTP + ADP + phosphate + 2 H(+). The protein operates within pyrimidine metabolism; CTP biosynthesis via de novo pathway; CTP from UDP: step 2/2. Its activity is regulated as follows. Allosterically activated by GTP, when glutamine is the substrate; GTP has no effect on the reaction when ammonia is the substrate. The allosteric effector GTP functions by stabilizing the protein conformation that binds the tetrahedral intermediate(s) formed during glutamine hydrolysis. Inhibited by the product CTP, via allosteric rather than competitive inhibition. Its function is as follows. Catalyzes the ATP-dependent amination of UTP to CTP with either L-glutamine or ammonia as the source of nitrogen. Regulates intracellular CTP levels through interactions with the four ribonucleotide triphosphates. In Aliivibrio salmonicida (strain LFI1238) (Vibrio salmonicida (strain LFI1238)), this protein is CTP synthase.